Consider the following 372-residue polypeptide: Phospho-N-acetylmuramoyl-pentapeptide-transferase (372 aa).

Helical transmembrane passes span 25–45 (RSLLSILTSLAIGLMLGPVMI), 73–93 (TMGGVLILMSIGISTLLWADL), 98–118 (VWIVLGVMVVFGAVGWADDWI), 134–154 (FFWTSVASLGAGISLYVIAQN), 176–196 (SIPLSAVPLGIAFIIFTYLVI), 211–231 (GLAIMPIVMVAAGLGVFAYLA), 251–271 (LVVICSAMVGAGLAFLWYNAH), 275–295 (IFMGDVGALALGAMLGTIAVM), 300–320 (IVFAIMGGVFVMEAISVFLQI), and 349–369 (QVVTRFWIITIMLVVLGLMTL).

The protein belongs to the glycosyltransferase 4 family. MraY subfamily. Mg(2+) is required as a cofactor.

It is found in the cell inner membrane. It catalyses the reaction UDP-N-acetyl-alpha-D-muramoyl-L-alanyl-gamma-D-glutamyl-meso-2,6-diaminopimeloyl-D-alanyl-D-alanine + di-trans,octa-cis-undecaprenyl phosphate = di-trans,octa-cis-undecaprenyl diphospho-N-acetyl-alpha-D-muramoyl-L-alanyl-D-glutamyl-meso-2,6-diaminopimeloyl-D-alanyl-D-alanine + UMP. Its pathway is cell wall biogenesis; peptidoglycan biosynthesis. Functionally, catalyzes the initial step of the lipid cycle reactions in the biosynthesis of the cell wall peptidoglycan: transfers peptidoglycan precursor phospho-MurNAc-pentapeptide from UDP-MurNAc-pentapeptide onto the lipid carrier undecaprenyl phosphate, yielding undecaprenyl-pyrophosphoryl-MurNAc-pentapeptide, known as lipid I. The protein is Phospho-N-acetylmuramoyl-pentapeptide-transferase of Acinetobacter baylyi (strain ATCC 33305 / BD413 / ADP1).